Here is a 529-residue protein sequence, read N- to C-terminus: Cytochrome P450 monooxygenase CLM2 (529 aa).

A helical membrane pass occupies residues 2–19 (LLIIVVLVGTLIYFLSFH). 2 N-linked (GlcNAc...) asparagine glycosylation sites follow: asparagine 244 and asparagine 281. Cysteine 438 serves as a coordination point for heme.

This sequence belongs to the cytochrome P450 family. Requires heme as cofactor.

It localises to the membrane. It catalyses the reaction (-)-longiborneol + reduced [NADPH--hemoprotein reductase] + O2 = culmorin + oxidized [NADPH--hemoprotein reductase] + H2O + H(+). Its pathway is mycotoxin biosynthesis. In terms of biological role, cytochrome P450 monooxygenase involved in the biosynthesis of culmorin, a tricyclic sesquiterpene diol reported to have antifungal activity and some phytotoxicity to wheat coleoptile tissue, contributing to Fusarium head blight disease. The terpene cyclase CLM1 is responsible for the cyclization of farnesyl diphosphate into the intermediate longiborneol. Longiborneol is then hydroxylated in a regio- and endo-stereoselective manner at position C-11 by the cytochrome P450 monooxygenase CLM2 to produce culmorin. Additional non-specific oxygenases are also able to hydroxylate longiborneol at other sites than C-11 leading to 3-hydroxylongiborneol, 5-hydroxylongiborneol, 12-hydroxylongiborneol and 15-hydroxylongiborneol. Moreover, another oxygenase capable of installing a C-11 exo-hydroxy group in longiborneol can also yield 11-epi-acetylculmorin. The production of these longiborneol derivatives is dwarfed by the high abundance of culmorin, suggesting that CLM2 displays superior enzymatic activity to the unidentified, possibly promiscuous, additional oxygenases. The sequence is that of Cytochrome P450 monooxygenase CLM2 from Gibberella zeae (strain ATCC MYA-4620 / CBS 123657 / FGSC 9075 / NRRL 31084 / PH-1) (Wheat head blight fungus).